Consider the following 313-residue polypeptide: Cytochrome c biogenesis protein CcsA (313 aa).

A run of 8 helical transmembrane segments spans residues 9 to 29 (ILTH…LITF), 44 to 64 (GIIV…ISSG), 71 to 91 (LYES…IPYF), 111 to 131 (GFAT…VPAL), 143 to 163 (MILG…LLVI), 217 to 237 (VISL…VWAN), 244 to 264 (WNWD…AIYL), and 278 to 298 (AIVA…VNLL).

Belongs to the CcmF/CycK/Ccl1/NrfE/CcsA family. As to quaternary structure, may interact with Ccs1.

The protein localises to the plastid. It is found in the chloroplast thylakoid membrane. Required during biogenesis of c-type cytochromes (cytochrome c6 and cytochrome f) at the step of heme attachment. This chain is Cytochrome c biogenesis protein CcsA, found in Solanum bulbocastanum (Wild potato).